The sequence spans 368 residues: MRVIFTGGGTGGHIYPIMAIIERLKERGISTNDKILFVGTKKGLESKIVPAAGVNFKTINIQGFNRKHPLKNFETIKLFLQATKSARKILKEFKPDVVLGTGGYVSGAMVYEAAKMHIPTMIHESNSVVGLANKFLGHYVDRICYTFDDAAKEFPEKKKLVKTGNPRSQQVLSLHEEKIDIKKKWGLNPDMPTVLVFGGSRGALAINRIMLKSLMNLKTKPYQIIWATGTYYFDSVQKKLKGVDIGTNIKVLPYIKNMPGLLPEMTCVVSRSGATSIAEFTALGVPVILIPSPNVTHNHQMKNALDLEKAGAALVIPEDDLNPNNFVSSIDHILLDEKYAKEMSQASKALGVPDASDQVIKVMEEISR.

UDP-N-acetyl-alpha-D-glucosamine-binding positions include 10 to 12 (TGG), N126, S200, I255, and Q300.

The protein belongs to the glycosyltransferase 28 family. MurG subfamily.

The protein resides in the cell membrane. It carries out the reaction Mur2Ac(oyl-L-Ala-gamma-D-Glu-L-Lys-D-Ala-D-Ala)-di-trans,octa-cis-undecaprenyl diphosphate + UDP-N-acetyl-alpha-D-glucosamine = beta-D-GlcNAc-(1-&gt;4)-Mur2Ac(oyl-L-Ala-gamma-D-Glu-L-Lys-D-Ala-D-Ala)-di-trans,octa-cis-undecaprenyl diphosphate + UDP + H(+). Its pathway is cell wall biogenesis; peptidoglycan biosynthesis. Its function is as follows. Cell wall formation. Catalyzes the transfer of a GlcNAc subunit on undecaprenyl-pyrophosphoryl-MurNAc-pentapeptide (lipid intermediate I) to form undecaprenyl-pyrophosphoryl-MurNAc-(pentapeptide)GlcNAc (lipid intermediate II). The sequence is that of UDP-N-acetylglucosamine--N-acetylmuramyl-(pentapeptide) pyrophosphoryl-undecaprenol N-acetylglucosamine transferase from Lactobacillus helveticus (strain DPC 4571).